A 117-amino-acid polypeptide reads, in one-letter code: uncharacterized protein (117 aa).

The signal sequence occupies residues 1–18 (MKFFWVSSLLGLLGLSTA). A glycan (N-linked (GlcNAc...) asparagine) is linked at N86.

This is an uncharacterized protein from Schizosaccharomyces pombe (strain 972 / ATCC 24843) (Fission yeast).